Here is a 394-residue protein sequence, read N- to C-terminus: Phosphopentomutase (394 aa).

Mn(2+) contacts are provided by Asp13, Asp286, His291, Asp327, His328, and His339.

Belongs to the phosphopentomutase family. It depends on Mn(2+) as a cofactor.

The protein localises to the cytoplasm. The catalysed reaction is 2-deoxy-alpha-D-ribose 1-phosphate = 2-deoxy-D-ribose 5-phosphate. It carries out the reaction alpha-D-ribose 1-phosphate = D-ribose 5-phosphate. It participates in carbohydrate degradation; 2-deoxy-D-ribose 1-phosphate degradation; D-glyceraldehyde 3-phosphate and acetaldehyde from 2-deoxy-alpha-D-ribose 1-phosphate: step 1/2. In terms of biological role, isomerase that catalyzes the conversion of deoxy-ribose 1-phosphate (dRib-1-P) and ribose 1-phosphate (Rib-1-P) to deoxy-ribose 5-phosphate (dRib-5-P) and ribose 5-phosphate (Rib-5-P), respectively. This is Phosphopentomutase from Bacillus thuringiensis (strain Al Hakam).